The chain runs to 298 residues: Protein REVEILLE 8 (298 aa).

The interval 1 to 44 is disordered; sequence MSSSPSRNPTNAEAPPPPPTSTDAVAEGSSKKVRKPYTITKSRE. Positions 38–92 constitute an HTH myb-type domain; the sequence is TITKSRESWTEEEHDKFLEALQLFDRDWKKIEDFVGSKTVIQIRSHAQKYFLKVQ. A DNA-binding region (H-T-H motif) is located at residues 65 to 88; sequence WKKIEDFVGSKTVIQIRSHAQKYF. A disordered region spans residues 96–123; sequence TLAHVPPPRPKRKAAHPYPQKASKNAQM.

It is found in the nucleus. In terms of biological role, transcriptional activator of evening element (EE)-containing clock-controlled genes. Forms a negative feedback loop with APRR5. Regulates the pattern of histone H3 acetylation of the TOC1 promoter. RVE4, RVE6 and RVE8 are components of the circadian system acting synergistically to regulate flowering time, redundantly to regulate leaf growth, and antagonistically to regulate hypocotyl elongation; their action seems independent of ZTL and HY5. The chain is Protein REVEILLE 8 from Arabidopsis thaliana (Mouse-ear cress).